A 296-amino-acid chain; its full sequence is Diguanylate cyclase DgcS (296 aa).

The GGDEF domain maps to Gly165–Thr293. Mg(2+)-binding residues include Asp173, Leu174, and Asp216. Asp216 is a catalytic residue.

The cofactor is Mg(2+).

It catalyses the reaction 2 GTP = 3',3'-c-di-GMP + 2 diphosphate. Catalyzes the synthesis of cyclic-di-GMP (c-di-GMP) via the condensation of 2 GTP molecules. May be involved in the regulation of formation of solid surface-associated biofilms and pellicles according to environmental conditions. This chain is Diguanylate cyclase DgcS, found in Shewanella oneidensis (strain ATCC 700550 / JCM 31522 / CIP 106686 / LMG 19005 / NCIMB 14063 / MR-1).